The following is a 64-amino-acid chain: Small ribosomal subunit protein bS21 (64 aa).

The protein belongs to the bacterial ribosomal protein bS21 family.

The polypeptide is Small ribosomal subunit protein bS21 (Sulfurihydrogenibium sp. (strain YO3AOP1)).